The chain runs to 376 residues: Protein-tyrosine sulfotransferase 2 (376 aa).

Over 1–8 (MRLSVRKV) the chain is Cytoplasmic. The helical; Signal-anchor for type II membrane protein transmembrane segment at 9–25 (LLAVGCALALVLAVQLG) threads the bilayer. Over 26 to 376 (QQVLECRAVL…NSTSPHLGSS (351 aa)) the chain is Lumenal. 77–81 (RSGTT) serves as a coordination point for 3'-phosphoadenylyl sulfate. A disulfide bond links Cys95 and Cys155. The active-site Proton donor/acceptor is the Glu98. The segment at 100–104 (RIIPR) is interaction with peptide substrate. 3'-phosphoadenylyl sulfate is bound by residues Arg182, Ser190, and Arg194. Cysteines 224 and 232 form a disulfide. Residues Tyr237, 284-293 (STDQVIKPVN), and Lys299 each bind 3'-phosphoadenylyl sulfate. N-linked (GlcNAc...) asparagine glycosylation is found at Asn342 and Asn367.

The protein belongs to the protein sulfotransferase family. Homodimer. Can also form heterodimers with TPST1. In terms of processing, N-glycosylated.

The protein resides in the golgi apparatus membrane. The catalysed reaction is L-tyrosyl-[protein] + 3'-phosphoadenylyl sulfate = O-sulfo-L-tyrosine-[protein] + adenosine 3',5'-bisphosphate + H(+). Catalyzes the O-sulfation of tyrosine residues within acidic motifs of polypeptides, using 3'-phosphoadenylyl sulfate (PAPS) as cosubstrate. The sequence is that of Protein-tyrosine sulfotransferase 2 (Tpst2) from Rattus norvegicus (Rat).